The sequence spans 447 residues: MVSCENLWQQALAILATQLTKPAFDTWIKASVLISLGDGVATIQVENGFVLNHLQKSYGPLLMEVLTDLTGQEITVKLITDGLEPHSLIGQESSLPMETTPKNATALNGKYTFSRFVVGPTNRMAHAASLAVAESPGREFNPLFLCGGVGLGKTHLMQAIAHYRLEMYPNAKVYYVSTERFTNDLITAIRQDNMEDFRSYYRSADFLLIDDIQFIKGKEYTQEEFFHTFNSLHEAGKQVVVASDRAPQRIPGLQDRLISRFSMGLIADIQVPDLETRMAILQKKAEYDRIRLPKEVIEYIASHYTSNIRELEGALIRAIAYTSLSNVAMTVENIAPVLNPPVEKVAAAPETIITIVAQHYQLKVEELLSNSRRREVSLARQVGMYLMRQHTDLSLPRIGEAFGGKDHTTVMYSCDKITQLQQKDWETSQTLTSLSHRINIAGQAPES.

Positions 1-79 are domain I, interacts with DnaA modulators; the sequence is MVSCENLWQQ…TGQEITVKLI (79 aa). The domain II stretch occupies residues 79-105; sequence ITDGLEPHSLIGQESSLPMETTPKNAT. The interval 106-322 is domain III, AAA+ region; sequence ALNGKYTFSR…GALIRAIAYT (217 aa). The ATP site is built by G150, G152, K153, and T154. Positions 323-447 are domain IV, binds dsDNA; that stretch reads SLSNVAMTVE…INIAGQAPES (125 aa).

This sequence belongs to the DnaA family. In terms of assembly, oligomerizes as a right-handed, spiral filament on DNA at oriC.

Its subcellular location is the cytoplasm. Plays an essential role in the initiation and regulation of chromosomal replication. ATP-DnaA binds to the origin of replication (oriC) to initiate formation of the DNA replication initiation complex once per cell cycle. Binds the DnaA box (a 9 base pair repeat at the origin) and separates the double-stranded (ds)DNA. Forms a right-handed helical filament on oriC DNA; dsDNA binds to the exterior of the filament while single-stranded (ss)DNA is stabiized in the filament's interior. The ATP-DnaA-oriC complex binds and stabilizes one strand of the AT-rich DNA unwinding element (DUE), permitting loading of DNA polymerase. After initiation quickly degrades to an ADP-DnaA complex that is not apt for DNA replication. Binds acidic phospholipids. Functionally, isolated domain IV (residues 348-447) binds both E.coli and B.subtilis oriC. The polypeptide is Chromosomal replication initiator protein DnaA (Synechocystis sp. (strain ATCC 27184 / PCC 6803 / Kazusa)).